The following is a 104-amino-acid chain: Putative ankyrin repeat protein L677 (104 aa).

3 ANK repeats span residues 16-43 (FNKSSLEIACIENDIGTVKKIINLNPNL), 44-73 (DISHCLNLAIESKNYQIVKFLLKKNISNSV), and 75-102 (LEAYDCACINGKISIMELLIQYLNNKSI).

In Acanthamoeba polyphaga (Amoeba), this protein is Putative ankyrin repeat protein L677.